Here is a 133-residue protein sequence, read N- to C-terminus: Small ribosomal subunit protein uS8 (133 aa).

This sequence belongs to the universal ribosomal protein uS8 family. Part of the 30S ribosomal subunit. Contacts proteins S5 and S12.

Functionally, one of the primary rRNA binding proteins, it binds directly to 16S rRNA central domain where it helps coordinate assembly of the platform of the 30S subunit. This chain is Small ribosomal subunit protein uS8, found in Chlamydia trachomatis serovar A (strain ATCC VR-571B / DSM 19440 / HAR-13).